The primary structure comprises 64 residues: Translation machinery-associated protein 7 homolog (64 aa).

The disordered stretch occupies residues 1–64 (MSGREGGKKK…GGGIKKSGKK (64 aa)). Residues 27 to 38 (MAFKQKQKEQQK) show a composition bias toward basic and acidic residues. Positions 27-50 (MAFKQKQKEQQKALEAAKANASKK) form a coiled coil. Residues 39 to 50 (ALEAAKANASKK) show a composition bias toward low complexity. Over residues 53–64 (LVGGGIKKSGKK) the composition is skewed to gly residues.

This chain is Translation machinery-associated protein 7 homolog, found in Drosophila melanogaster (Fruit fly).